A 428-amino-acid chain; its full sequence is 3-phosphoshikimate 1-carboxyvinyltransferase (428 aa).

The 3-phosphoshikimate site is built by lysine 21, serine 22, and arginine 26. Lysine 21 serves as a coordination point for phosphoenolpyruvate. The phosphoenolpyruvate site is built by glycine 93 and arginine 121. 4 residues coordinate 3-phosphoshikimate: serine 166, glutamine 168, aspartate 314, and lysine 341. Glutamine 168 is a binding site for phosphoenolpyruvate. The Proton acceptor role is filled by aspartate 314. The phosphoenolpyruvate site is built by arginine 345 and arginine 388.

This sequence belongs to the EPSP synthase family. Monomer.

The protein resides in the cytoplasm. The catalysed reaction is 3-phosphoshikimate + phosphoenolpyruvate = 5-O-(1-carboxyvinyl)-3-phosphoshikimate + phosphate. Its pathway is metabolic intermediate biosynthesis; chorismate biosynthesis; chorismate from D-erythrose 4-phosphate and phosphoenolpyruvate: step 6/7. Catalyzes the transfer of the enolpyruvyl moiety of phosphoenolpyruvate (PEP) to the 5-hydroxyl of shikimate-3-phosphate (S3P) to produce enolpyruvyl shikimate-3-phosphate and inorganic phosphate. The protein is 3-phosphoshikimate 1-carboxyvinyltransferase of Syntrophomonas wolfei subsp. wolfei (strain DSM 2245B / Goettingen).